A 502-amino-acid chain; its full sequence is Sodium/proline symporter (502 aa).

Transmembrane regions (helical) follow at residues 6 to 26 (PMLV…FIAW), 42 to 62 (LGPF…WLLM), 68 to 88 (IFLS…GAWI), 127 to 147 (IISA…GIVA), 163 to 183 (ALWA…FLAV), 192 to 212 (SLMI…VGGF), 235 to 255 (FVAI…PHIL), 276 to 296 (TWMI…IAYF), 320 to 340 (ILFN…AVMS), 371 to 391 (LVWV…ALAA), 398 to 418 (LGLV…VVLF), 430 to 450 (ALAG…YGWL), and 452 to 472 (LYEI…FSLL).

This sequence belongs to the sodium:solute symporter (SSF) (TC 2.A.21) family.

It localises to the cell inner membrane. It carries out the reaction L-proline(in) + Na(+)(in) = L-proline(out) + Na(+)(out). In terms of biological role, catalyzes the sodium-dependent uptake of extracellular L-proline. The polypeptide is Sodium/proline symporter (Salmonella typhimurium (strain LT2 / SGSC1412 / ATCC 700720)).